The following is a 202-amino-acid chain: Pyridoxal 5'-phosphate synthase subunit PdxT (202 aa).

49–51 (GES) is a binding site for L-glutamine. The active-site Nucleophile is the cysteine 81. Residues arginine 110 and 139 to 140 (IR) contribute to the L-glutamine site. Catalysis depends on charge relay system residues histidine 182 and glutamate 184.

Belongs to the glutaminase PdxT/SNO family. As to quaternary structure, in the presence of PdxS, forms a dodecamer of heterodimers. Only shows activity in the heterodimer.

The catalysed reaction is aldehydo-D-ribose 5-phosphate + D-glyceraldehyde 3-phosphate + L-glutamine = pyridoxal 5'-phosphate + L-glutamate + phosphate + 3 H2O + H(+). The enzyme catalyses L-glutamine + H2O = L-glutamate + NH4(+). It functions in the pathway cofactor biosynthesis; pyridoxal 5'-phosphate biosynthesis. Functionally, catalyzes the hydrolysis of glutamine to glutamate and ammonia as part of the biosynthesis of pyridoxal 5'-phosphate. The resulting ammonia molecule is channeled to the active site of PdxS. The sequence is that of Pyridoxal 5'-phosphate synthase subunit PdxT from Rhodococcus jostii (strain RHA1).